Consider the following 308-residue polypeptide: MRIAFLGTPDFAVTCLAELVASGHEIVCVYSQPPAPRGRGQDLKPSPVHAFAEGLGLPVRTPVSMKTPEEIAAFQALDLDAAVVVAFGQILVKDVLEAPKHGCFNLHASLLPRWRGAAPIQRAIMAGDAVTGVQVMRMSEGLDEGPILMSQQVAIADDDTAASLHDKLAAVGARLLPVALAAIEREVVQETPQAEDGVTYAKKIKSAEARIDWTRPAAEIDRHIRGLSPFPGAWFEAPSEKGPVRVKALLSRVEAASGVAGTTLDDALLIACGEGSIRLLKAQREGKGVQDAQTFTRGFPIATGTVLA.

Position 109-112 (109-112) interacts with (6S)-5,6,7,8-tetrahydrofolate; the sequence is SLLP.

Belongs to the Fmt family.

It catalyses the reaction L-methionyl-tRNA(fMet) + (6R)-10-formyltetrahydrofolate = N-formyl-L-methionyl-tRNA(fMet) + (6S)-5,6,7,8-tetrahydrofolate + H(+). Its function is as follows. Attaches a formyl group to the free amino group of methionyl-tRNA(fMet). The formyl group appears to play a dual role in the initiator identity of N-formylmethionyl-tRNA by promoting its recognition by IF2 and preventing the misappropriation of this tRNA by the elongation apparatus. This is Methionyl-tRNA formyltransferase from Caulobacter vibrioides (strain NA1000 / CB15N) (Caulobacter crescentus).